The sequence spans 595 residues: MAQRFITLILLLCSVLLAPHSAQSSLFGENASFGTKNSQSRFIPVDQAFAFDFHQQGDQLNLSWQIHPGYYLYRQQIKIVPQQAALGAFTLPEGITHHDEFYGEVEIFKQQLTLKIPITQAAEQASVSVTYQGCAEAGFCYPPETRVIPLDVVVAASTASGTAAVNSSATVNPPATTQPEGDATPVPSTLPFSPLWALLIGIGIAFTPCVLPMYPLISAVILGREKPHSQRRILILAVVYVQGMALTYTLLGLVVAAAGLQFQAALQHPYVLIGLSVLFVLLALSMFGLYSLQLPSSLQTRLTQWSNSQRGGSLAGVFAMGALAGLICSPCTTAPLSAILLYIAQSGNMLAGGGTLYLYALGMGIPLVVVTLFGNKLIPRSGPWMQYVKEAFGFVILALPVFLLERVLGDVWGLRLWSLLAVAFFGWAFVLSLKAHAGWVRVCQLLLLAALLIVARPLQDWAFNGNTQQNAVKHINFQPVANLPQLQAVLAQAQGKPVMLDLYADWCVACKEFEKYTFSDDKVQRQLANTLLLQADVTANNAEHATLLKKFNVLGLPTILFFDSQGNEITAARVTGFMDAAQFLQHLQNTPAVTK.

The signal sequence occupies residues 1-24 (MAQRFITLILLLCSVLLAPHSAQS). C134 and C140 are oxidised to a cystine. The disordered stretch occupies residues 166–186 (NSSATVNPPATTQPEGDATPV). The next 9 membrane-spanning stretches (helical) occupy residues 197–217 (ALLIGIGIAFTPCVLPMYPLI), 233–253 (ILILAVVYVQGMALTYTLLGL), 270–290 (YVLIGLSVLFVLLALSMFGLY), 311–331 (GGSLAGVFAMGALAGLICSPC), 332–352 (TTAPLSAILLYIAQSGNMLAG), 353–373 (GGTLYLYALGMGIPLVVVTLF), 384–404 (WMQYVKEAFGFVILALPVFLL), 411–431 (VWGLRLWSLLAVAFFGWAFVL), and 435–455 (AHAGWVRVCQLLLLAALLIVA). C209 and C331 are disulfide-bonded. A Thioredoxin domain is found at 452–592 (LIVARPLQDW…FLQHLQNTPA (141 aa)). C507 and C510 are oxidised to a cystine.

This sequence belongs to the thioredoxin family. DsbD subfamily.

It is found in the cell inner membrane. It carries out the reaction [protein]-dithiol + NAD(+) = [protein]-disulfide + NADH + H(+). The enzyme catalyses [protein]-dithiol + NADP(+) = [protein]-disulfide + NADPH + H(+). Its function is as follows. Required to facilitate the formation of correct disulfide bonds in some periplasmic proteins and for the assembly of the periplasmic c-type cytochromes. Acts by transferring electrons from cytoplasmic thioredoxin to the periplasm. This transfer involves a cascade of disulfide bond formation and reduction steps. The chain is Thiol:disulfide interchange protein DsbD from Yersinia pestis bv. Antiqua (strain Nepal516).